A 376-amino-acid polypeptide reads, in one-letter code: Gibberellin 20 oxidase 4 (376 aa).

Positions 222 to 322 (DNESIFRLNY…RKTLAFFLCP (101 aa)) constitute a Fe2OG dioxygenase domain. Fe cation is bound by residues H247, D249, and H303. R313 is an active-site residue.

This sequence belongs to the iron/ascorbate-dependent oxidoreductase family. GA20OX subfamily. The cofactor is Fe(2+). L-ascorbate serves as cofactor. Expressed in roots. Detected in leaves, inflorescences and siliques, but not in stems and dry seeds.

The catalysed reaction is gibberellin A12 + 2 2-oxoglutarate + 3 O2 + H(+) = gibberellin A9 + 2 succinate + 3 CO2 + 2 H2O. The enzyme catalyses gibberellin A53 + 2 2-oxoglutarate + 3 O2 + H(+) = gibberellin A20 + 2 succinate + 3 CO2 + 2 H2O. It participates in plant hormone biosynthesis; gibberellin biosynthesis. Functionally, key oxidase enzyme in the biosynthesis of gibberellin that catalyzes the conversion of GA12 and GA53 to GA9 and GA20 respectively, via a three-step oxidation at C-20 of the GA skeleton. The chain is Gibberellin 20 oxidase 4 (GA20OX4) from Arabidopsis thaliana (Mouse-ear cress).